Here is a 431-residue protein sequence, read N- to C-terminus: MFSTLKNAFKDKEIRNKIYFTLFILLLYRIGANITVPGINVKAITQVAQTGLVPMLDTVSGGGLDNYSIFSLGVSPYITAQIVIQLLQMDIVPTLVEWGKQGEVGRRKTNQVTRYLTLVVAFVQSIGITLGFNALTQMGLVKNQTPQTYVEIAIIMTAGTMLLTWLGDEITDKGLGNGVSVIIFAGIIARLPSGLYQIYKEEIINNSASDRWQGILFFIAVIVAILIVTQLVTWVEQADRRIPIQYTRRATISGSESFLPLKVNVSGVIPVIFASSFIVTPATILMAFQRTQGDQQWFKVMNQIFSLQTTPGVIIYTLLIILFTFFYAFVQVNPEKLAENLQKQGAYIPSVWPGKDTQDYVSKMLIKLSTVGSIFLGLVALLPQLATNFWNLPSSIGLGGTSLLIVIGVVLELSRQINGLLMKREYVGFIR.

10 consecutive transmembrane segments (helical) span residues 18–38, 67–87, 115–135, 150–170, 178–198, 215–235, 268–288, 312–332, 365–385, and 392–412; these read IYFT…TVPG, YSIF…IQLL, YLTL…FNAL, VEIA…GDEI, GVSV…LYQI, ILFF…VTWV, VIPV…LMAF, GVII…FVQV, LIKL…LPQL, and LPSS…VVLE.

Belongs to the SecY/SEC61-alpha family. Component of the Sec protein translocase complex. Heterotrimer consisting of SecY, SecE and SecG subunits. The heterotrimers can form oligomers, although 1 heterotrimer is thought to be able to translocate proteins. Interacts with the ribosome. Interacts with SecDF, and other proteins may be involved. Interacts with SecA.

The protein resides in the cell membrane. The central subunit of the protein translocation channel SecYEG. Consists of two halves formed by TMs 1-5 and 6-10. These two domains form a lateral gate at the front which open onto the bilayer between TMs 2 and 7, and are clamped together by SecE at the back. The channel is closed by both a pore ring composed of hydrophobic SecY resides and a short helix (helix 2A) on the extracellular side of the membrane which forms a plug. The plug probably moves laterally to allow the channel to open. The ring and the pore may move independently. This chain is Protein translocase subunit SecY 1, found in Lactobacillus kefiranofaciens subsp. kefiranofaciens.